The sequence spans 453 residues: Chromosomal replication initiator protein DnaA (453 aa).

The tract at residues 1 to 74 is domain I, interacts with DnaA modulators; that stretch reads MKEKQFWNRI…GFEIYDAEIT (74 aa). A domain II region spans residues 74–113; sequence TPHYIFTKPQDTTSSQVEEATNLTLYDYSPKLVSIPYSDT. The segment at 114–331 is domain III, AAA+ region; it reads GLKEKYTFDN…GAINDITLIA (218 aa). ATP-binding residues include G158, G160, K161, and T162. A domain IV, binds dsDNA region spans residues 332-453; it reads RVKKIKDITI…EIESIKKKIK (122 aa).

It belongs to the DnaA family. As to quaternary structure, oligomerizes as a right-handed, spiral filament on DNA at oriC.

It is found in the cytoplasm. Functionally, plays an essential role in the initiation and regulation of chromosomal replication. ATP-DnaA binds to the origin of replication (oriC) to initiate formation of the DNA replication initiation complex once per cell cycle. Binds the DnaA box (a 9 base pair repeat at the origin) and separates the double-stranded (ds)DNA. Forms a right-handed helical filament on oriC DNA; dsDNA binds to the exterior of the filament while single-stranded (ss)DNA is stabiized in the filament's interior. The ATP-DnaA-oriC complex binds and stabilizes one strand of the AT-rich DNA unwinding element (DUE), permitting loading of DNA polymerase. After initiation quickly degrades to an ADP-DnaA complex that is not apt for DNA replication. Binds acidic phospholipids. The protein is Chromosomal replication initiator protein DnaA of Streptococcus pneumoniae (strain P1031).